We begin with the raw amino-acid sequence, 151 residues long: Hemoglobin-2 (151 aa).

N-acetylthreonine is present on T2. One can recognise a Globin domain in the interval 3-148 (TLTNPQKAAI…ICKTLGDYMK (146 aa)). Residue H97 participates in heme b binding.

This sequence belongs to the globin family. As to quaternary structure, homotetramer.

The protein resides in the cytoplasm. This is Hemoglobin-2 from Phacoides pectinatus (Thick lucine).